A 213-amino-acid chain; its full sequence is Imidazole glycerol phosphate synthase subunit HisH (213 aa).

Residues 4 to 211 (NLGLIDYGMG…LTWLRNGAEP (208 aa)) form the Glutamine amidotransferase type-1 domain. Cys-82 serves as the catalytic Nucleophile. Catalysis depends on residues His-186 and Glu-188.

As to quaternary structure, heterodimer of HisH and HisF.

It is found in the cytoplasm. The enzyme catalyses 5-[(5-phospho-1-deoxy-D-ribulos-1-ylimino)methylamino]-1-(5-phospho-beta-D-ribosyl)imidazole-4-carboxamide + L-glutamine = D-erythro-1-(imidazol-4-yl)glycerol 3-phosphate + 5-amino-1-(5-phospho-beta-D-ribosyl)imidazole-4-carboxamide + L-glutamate + H(+). It carries out the reaction L-glutamine + H2O = L-glutamate + NH4(+). It participates in amino-acid biosynthesis; L-histidine biosynthesis; L-histidine from 5-phospho-alpha-D-ribose 1-diphosphate: step 5/9. In terms of biological role, IGPS catalyzes the conversion of PRFAR and glutamine to IGP, AICAR and glutamate. The HisH subunit catalyzes the hydrolysis of glutamine to glutamate and ammonia as part of the synthesis of IGP and AICAR. The resulting ammonia molecule is channeled to the active site of HisF. This chain is Imidazole glycerol phosphate synthase subunit HisH, found in Synechococcus sp. (strain CC9605).